A 202-amino-acid chain; its full sequence is Probable cobalt-precorrin-6B C(15)-methyltransferase (decarboxylating) (202 aa).

S-adenosyl-L-methionine is bound by residues Thr-29, 53-57 (GCGSG), Asp-77, and Val-106.

This sequence belongs to the methyltransferase superfamily. Archaeal-type CbiT family.

It catalyses the reaction Co-precorrin-6B + S-adenosyl-L-methionine = Co-precorrin-7 + S-adenosyl-L-homocysteine + CO2. It participates in cofactor biosynthesis; adenosylcobalamin biosynthesis; cob(II)yrinate a,c-diamide from sirohydrochlorin (anaerobic route): step 8/10. Its function is as follows. Catalyzes the methylation of C-15 in cobalt-precorrin-6B followed by the decarboxylation of C-12 to form cobalt-precorrin-7. The chain is Probable cobalt-precorrin-6B C(15)-methyltransferase (decarboxylating) from Thermoplasma acidophilum (strain ATCC 25905 / DSM 1728 / JCM 9062 / NBRC 15155 / AMRC-C165).